A 475-amino-acid chain; its full sequence is Ribulose bisphosphate carboxylase large chain (475 aa).

The propeptide occupies 1-2 (MS). Residue P3 is modified to N-acetylproline. An N6,N6,N6-trimethyllysine modification is found at K14. Positions 123 and 173 each coordinate substrate. The Proton acceptor role is filled by K175. K177 is a substrate binding site. K201, D203, and E204 together coordinate Mg(2+). K201 carries the N6-carboxylysine modification. H294 functions as the Proton acceptor in the catalytic mechanism. R295, H327, and S379 together coordinate substrate.

This sequence belongs to the RuBisCO large chain family. Type I subfamily. As to quaternary structure, heterohexadecamer of 8 large chains and 8 small chains; disulfide-linked. The disulfide link is formed within the large subunit homodimers. Requires Mg(2+) as cofactor. In terms of processing, the disulfide bond which can form in the large chain dimeric partners within the hexadecamer appears to be associated with oxidative stress and protein turnover.

It is found in the plastid. The protein resides in the chloroplast. It catalyses the reaction 2 (2R)-3-phosphoglycerate + 2 H(+) = D-ribulose 1,5-bisphosphate + CO2 + H2O. The enzyme catalyses D-ribulose 1,5-bisphosphate + O2 = 2-phosphoglycolate + (2R)-3-phosphoglycerate + 2 H(+). In terms of biological role, ruBisCO catalyzes two reactions: the carboxylation of D-ribulose 1,5-bisphosphate, the primary event in carbon dioxide fixation, as well as the oxidative fragmentation of the pentose substrate in the photorespiration process. Both reactions occur simultaneously and in competition at the same active site. The chain is Ribulose bisphosphate carboxylase large chain from Chloranthus spicatus (Chulantree).